Here is a 504-residue protein sequence, read N- to C-terminus: L-carnitine/gamma-butyrobetaine antiporter (504 aa).

A run of 12 helical transmembrane segments spans residues 10–30 (IEPKVFFPPLIIVGILCWLTV), 51–71 (WGWAFEWYMVVMLFGWFWLVF), 92–112 (IFMMFASCTSAAVLFWGSIEI), 143–163 (GPLPWATYSFLSVAFAYFFFV), 195–215 (FYLVALIFAMGTSLGLATPLV), 231–251 (LDAIIITCWIILNAICVACGL), 263–283 (SYLSFLMLGWVFIVSGASFIM), 316–336 (WTVFYWAWWVIYAIQMSIFLA), 347–367 (LCFGMVLGLTASTWILWTVLG), 398–418 (WAALPLSTATMWGFFILCFIA), 446–466 (LLVRIGWSVLVGIIGIVLLAL), and 475–495 (AIIAGGCPLFFVNIMVTLSFI).

Belongs to the BCCT transporter (TC 2.A.15) family. CaiT subfamily. Homotrimer.

Its subcellular location is the cell inner membrane. The enzyme catalyses 4-(trimethylamino)butanoate(in) + (R)-carnitine(out) = 4-(trimethylamino)butanoate(out) + (R)-carnitine(in). It functions in the pathway amine and polyamine metabolism; carnitine metabolism. In terms of biological role, catalyzes the exchange of L-carnitine for gamma-butyrobetaine. This is L-carnitine/gamma-butyrobetaine antiporter from Escherichia coli O6:K15:H31 (strain 536 / UPEC).